A 99-amino-acid chain; its full sequence is Small ribosomal subunit protein eS24 (99 aa).

It belongs to the eukaryotic ribosomal protein eS24 family.

This chain is Small ribosomal subunit protein eS24, found in Pyrococcus horikoshii (strain ATCC 700860 / DSM 12428 / JCM 9974 / NBRC 100139 / OT-3).